The primary structure comprises 104 residues: V-type ATP synthase subunit F (104 aa).

It belongs to the V-ATPase F subunit family.

Produces ATP from ADP in the presence of a proton gradient across the membrane. This chain is V-type ATP synthase subunit F (atpF), found in Thermus thermophilus (strain ATCC 27634 / DSM 579 / HB8).